A 374-amino-acid polypeptide reads, in one-letter code: Cell division protein DivIB (374 aa).

The interval Met1 to Pro90 is disordered. Residues Met1–Arg103 lie on the Cytoplasmic side of the membrane. Residues Tyr39 to Asn53 are compositionally biased toward basic and acidic residues. Positions Ala56 to Pro75 are enriched in polar residues. The helical transmembrane segment at Leu104–Pro124 threads the bilayer. Residues Leu125–Glu374 lie on the Extracellular side of the membrane. The 72-residue stretch at Ser126–Tyr197 folds into the POTRA domain. Residues Lys325 to Glu374 form a disordered region. Acidic residues predominate over residues Glu326–Ala339. Residues Glu356 to Glu374 are compositionally biased toward polar residues.

This sequence belongs to the FtsQ/DivIB family. DivIB subfamily.

It localises to the cell membrane. Functionally, cell division protein that may be involved in stabilizing or promoting the assembly of the division complex. The chain is Cell division protein DivIB from Enterococcus faecalis (strain ATCC 700802 / V583).